Here is a 184-residue protein sequence, read N- to C-terminus: Mediator of RNA polymerase II transcription subunit 30 (184 aa).

Residues 136–179 (SQLRFASEEKREILEVNKKLKQKNQQLKQIMDQLRNLIWDINSM) are a coiled coil.

Belongs to the Mediator complex subunit 30 family. Component of the Mediator complex.

The protein localises to the nucleus. Functionally, component of the Mediator complex, a coactivator involved in the regulated transcription of nearly all RNA polymerase II-dependent genes. Mediator functions as a bridge to convey information from gene-specific regulatory proteins to the basal RNA polymerase II transcription machinery. Mediator is recruited to promoters by direct interactions with regulatory proteins and serves as a scaffold for the assembly of a functional preinitiation complex with RNA polymerase II and the general transcription factors. The polypeptide is Mediator of RNA polymerase II transcription subunit 30 (med30) (Xenopus laevis (African clawed frog)).